The sequence spans 180 residues: MERKFLTDLGLNPDQVNSIMAQYGKDMQKYEGLEAERDALKKTSSELSNKIEDLKANSANIEDLTKQIEKLKLDNENATKQLSAQKLDFAVTSTIKDFGAKNAKAVKALLNHDDIRFDSKGNLTGLEEQLKSLKDSDSYLFAEDKPAGKPIQAFLRGTGSWRQGCQPASEDCTKIERINK.

Belongs to the SPP1-like scaffolding protein family. Homodimer.

In terms of biological role, scaffolding protein involved in the icosahedric procapsid assembly. Coassembles with the capsid proteins to form the procapsid, in which the scaffolding protein is found within the external shell of icosahedrally arranged capsid protein subunits. In a subsequent step the scaffolding protein molecules are released from the procapsid. This chain is Capsid assembly scaffolding protein (g20), found in Lactococcus phage mv4 (Lactococcus delbrueckii bacteriophage mv4).